A 316-amino-acid polypeptide reads, in one-letter code: Methionyl-tRNA formyltransferase (316 aa).

112-115 (SLLP) contributes to the (6S)-5,6,7,8-tetrahydrofolate binding site.

Belongs to the Fmt family.

It catalyses the reaction L-methionyl-tRNA(fMet) + (6R)-10-formyltetrahydrofolate = N-formyl-L-methionyl-tRNA(fMet) + (6S)-5,6,7,8-tetrahydrofolate + H(+). Its function is as follows. Attaches a formyl group to the free amino group of methionyl-tRNA(fMet). The formyl group appears to play a dual role in the initiator identity of N-formylmethionyl-tRNA by promoting its recognition by IF2 and preventing the misappropriation of this tRNA by the elongation apparatus. The polypeptide is Methionyl-tRNA formyltransferase (Psychromonas ingrahamii (strain DSM 17664 / CCUG 51855 / 37)).